The following is a 500-amino-acid chain: Lysine--tRNA ligase (500 aa).

2 residues coordinate Mg(2+): E410 and E417.

It belongs to the class-II aminoacyl-tRNA synthetase family. In terms of assembly, homodimer. It depends on Mg(2+) as a cofactor.

The protein localises to the cytoplasm. It carries out the reaction tRNA(Lys) + L-lysine + ATP = L-lysyl-tRNA(Lys) + AMP + diphosphate. This Shewanella amazonensis (strain ATCC BAA-1098 / SB2B) protein is Lysine--tRNA ligase.